Here is an 853-residue protein sequence, read N- to C-terminus: A-kinase anchor protein 3 (853 aa).

Residues Val124–Ala137 form a PKA-RII subunit binding domain region. The disordered stretch occupies residues Arg188–Phe240. Phosphoserine occurs at positions 205 and 208. Positions Lys219–Pro235 are enriched in basic and acidic residues. A Phosphoserine modification is found at Ser403. Tyr404 is modified (phosphotyrosine). Phosphoserine occurs at positions 635 and 636.

The protein belongs to the AKAP110 family. In terms of assembly, interacts with ROPN1 and ROPN1L. Interacts with QRICH2. Post-translationally, phosphorylated by STK33 during sperm flagella assembly. Phosphorylated on tyrosine residues. As to expression, testis specific; only expressed in spermatids.

The protein resides in the cytoplasmic vesicle. The protein localises to the secretory vesicle. It localises to the acrosome. It is found in the cell projection. Its subcellular location is the cilium. The protein resides in the flagellum. Structural component of sperm fibrous sheath. Required for the formation of the subcellular structure of the sperm flagellum, sperm motility and male fertility. The sequence is that of A-kinase anchor protein 3 from Homo sapiens (Human).